Consider the following 148-residue polypeptide: Large-conductance mechanosensitive channel (148 aa).

The next 3 membrane-spanning stretches (helical) occupy residues 21–41, 45–65, and 92–112; these read IDLA…DSVV, IMPL…KFLV, and GNFL…FIIV.

Belongs to the MscL family. Homopentamer.

The protein localises to the cell inner membrane. In terms of biological role, channel that opens in response to stretch forces in the membrane lipid bilayer. May participate in the regulation of osmotic pressure changes within the cell. This Bordetella petrii (strain ATCC BAA-461 / DSM 12804 / CCUG 43448) protein is Large-conductance mechanosensitive channel.